The following is a 394-amino-acid chain: ATP phosphoribosyltransferase regulatory subunit (394 aa).

This sequence belongs to the class-II aminoacyl-tRNA synthetase family. HisZ subfamily. In terms of assembly, heteromultimer composed of HisG and HisZ subunits.

Its subcellular location is the cytoplasm. It participates in amino-acid biosynthesis; L-histidine biosynthesis; L-histidine from 5-phospho-alpha-D-ribose 1-diphosphate: step 1/9. Functionally, required for the first step of histidine biosynthesis. May allow the feedback regulation of ATP phosphoribosyltransferase activity by histidine. This Saccharophagus degradans (strain 2-40 / ATCC 43961 / DSM 17024) protein is ATP phosphoribosyltransferase regulatory subunit.